We begin with the raw amino-acid sequence, 308 residues long: MLSTVITKPPITAKPKNQWLAHLMLEFSDTPVGTQLTRTKRKGPLSVQKAFYPEGPDCAHIYLLHPPAGIVSGDELRIGIDVKKNAHLLFTTPGAGRFYRAREDLTIGDSQQTQITQFDLEAQAKCENFPQETIVYEGADGFNSVDINLTSTSVYLGWDITCLGLPNSDQTFIKGKYCQLNRLFCDAKLIYHDRISLSPSNNLLAHPAGLAGNTVFATFLAYAPILHNNPEHSNKPQQHKALVMQIRAKITAESAQEKVSITEINGLLVIRYLGHHAQECKQLFISLWQLLRPLLLNKTAVQPRIWHT.

It belongs to the UreD family. UreD, UreF and UreG form a complex that acts as a GTP-hydrolysis-dependent molecular chaperone, activating the urease apoprotein by helping to assemble the nickel containing metallocenter of UreC. The UreE protein probably delivers the nickel.

The protein localises to the cytoplasm. Its function is as follows. Required for maturation of urease via the functional incorporation of the urease nickel metallocenter. The protein is Urease accessory protein UreD of Psychromonas ingrahamii (strain DSM 17664 / CCUG 51855 / 37).